A 766-amino-acid polypeptide reads, in one-letter code: Probable serine/threonine-protein kinase KKQ8 (766 aa).

5 disordered regions span residues 1-165 (MPEH…DTSS), 201-240 (GHYAPGFIQPPKSPTSSRVPSRSNSRKGREHAGTVSAAQL), 277-297 (SDANGNSHNHASKNDGHLDLP), 362-384 (TRSHVQSGSDDSSDDDEELDDPS), and 417-437 (AAKNKHNQSSKHRTPSGAGVQ). The span at 14-25 (RSLSLGSSMRSL) shows a compositional bias: low complexity. The segment covering 49–64 (VDIRVDTASASREHTP) has biased composition (basic and acidic residues). The segment covering 94-120 (LTPTNSNPQSKSGSPVSQNTSQESLIT) has biased composition (polar residues). Basic and acidic residues predominate over residues 127 to 137 (EDYRPSKDSRR). 2 stretches are compositionally biased toward polar residues: residues 140–165 (RNASPMSSNGNLPINANTVIGPDTSS) and 214–223 (PTSSRVPSRS). Residues 288 to 297 (SKNDGHLDLP) show a composition bias toward basic and acidic residues. The segment covering 372 to 382 (DSSDDDEELDD) has biased composition (acidic residues). Positions 419–430 (KNKHNQSSKHRT) are enriched in basic residues. In terms of domain architecture, Protein kinase spans 449–752 (GKCVAVVGHG…IDKLLQTGWM (304 aa)). ATP-binding positions include 455–463 (VGHGAYGVV) and K493. D603 functions as the Proton acceptor in the catalytic mechanism.

Belongs to the protein kinase superfamily. CAMK Ser/Thr protein kinase family. NPR/HAL subfamily. HAL5 sub-subfamily.

Its subcellular location is the cytoplasm. The enzyme catalyses L-seryl-[protein] + ATP = O-phospho-L-seryl-[protein] + ADP + H(+). It catalyses the reaction L-threonyl-[protein] + ATP = O-phospho-L-threonyl-[protein] + ADP + H(+). The chain is Probable serine/threonine-protein kinase KKQ8 (KKQ8) from Candida glabrata (strain ATCC 2001 / BCRC 20586 / JCM 3761 / NBRC 0622 / NRRL Y-65 / CBS 138) (Yeast).